A 321-amino-acid chain; its full sequence is Ribosomal protein L11 methyltransferase (321 aa).

Residues T150, G171, D193, and N256 each coordinate S-adenosyl-L-methionine.

It belongs to the methyltransferase superfamily. PrmA family.

Its subcellular location is the cytoplasm. It catalyses the reaction L-lysyl-[protein] + 3 S-adenosyl-L-methionine = N(6),N(6),N(6)-trimethyl-L-lysyl-[protein] + 3 S-adenosyl-L-homocysteine + 3 H(+). Functionally, methylates ribosomal protein L11. In Herpetosiphon aurantiacus (strain ATCC 23779 / DSM 785 / 114-95), this protein is Ribosomal protein L11 methyltransferase.